The following is a 210-amino-acid chain: Large ribosomal subunit protein uL3 (210 aa).

The segment covering 132 to 144 (GPMKHGSKYHRRP) has biased composition (basic residues). A disordered region spans residues 132–152 (GPMKHGSKYHRRPGSAGAKGP).

Belongs to the universal ribosomal protein uL3 family. Part of the 50S ribosomal subunit. Forms a cluster with proteins L14 and L19.

In terms of biological role, one of the primary rRNA binding proteins, it binds directly near the 3'-end of the 23S rRNA, where it nucleates assembly of the 50S subunit. The polypeptide is Large ribosomal subunit protein uL3 (Heliobacterium modesticaldum (strain ATCC 51547 / Ice1)).